A 495-amino-acid polypeptide reads, in one-letter code: Chromosomal replication initiator protein DnaA (495 aa).

Residues 1 to 83 (MSVALWQQCL…KVQLTVGSRR (83 aa)) are domain I, interacts with DnaA modulators. The tract at residues 83-158 (RNVAMSSPRD…QVEGSLKHQS (76 aa)) is domain II. Positions 86 to 127 (AMSSPRDLGAPVSATTMNASRPTEAPAVHAAPRAKGDYADEQ) are disordered. Residues 159–375 (GLNPNFTFET…GALKKVIADS (217 aa)) form a domain III, AAA+ region region. Residues glycine 203, glycine 205, lysine 206, and threonine 207 each contribute to the ATP site. The domain IV, binds dsDNA stretch occupies residues 376-495 (HFMGKPITQD…YKNLLRLLTS (120 aa)).

Belongs to the DnaA family. Oligomerizes as a right-handed, spiral filament on DNA at oriC.

It is found in the cytoplasm. Plays an essential role in the initiation and regulation of chromosomal replication. ATP-DnaA binds to the origin of replication (oriC) to initiate formation of the DNA replication initiation complex once per cell cycle. Binds the DnaA box (a 9 base pair repeat at the origin) and separates the double-stranded (ds)DNA. Forms a right-handed helical filament on oriC DNA; dsDNA binds to the exterior of the filament while single-stranded (ss)DNA is stabiized in the filament's interior. The ATP-DnaA-oriC complex binds and stabilizes one strand of the AT-rich DNA unwinding element (DUE), permitting loading of DNA polymerase. After initiation quickly degrades to an ADP-DnaA complex that is not apt for DNA replication. Binds acidic phospholipids. In Chromohalobacter salexigens (strain ATCC BAA-138 / DSM 3043 / CIP 106854 / NCIMB 13768 / 1H11), this protein is Chromosomal replication initiator protein DnaA.